Consider the following 355-residue polypeptide: MKRDIKDLLNPALRNIAVYKVDGGQEAAVKLNQNESPFDLPFWMKEQILEEFRLEPWNRYPDILPFRGMDAYADFLGVSRDSVIMSNGSNEMLYTIFLACLSPGKKILIPEPSFSLYEKIALLLQADIVSVPMQPSLDFDADSLIERAKQEKVDFIVLSTPNNPTGKSLASPDIARIVRECDAIVLVDEAYIEFSREHSVLALIEECPNLIVLRTMSKALALAGMRIGFAIANPLLMAEIAKPKIPFASSRFAEITLQHVLRYYYLVTDAVSYILGERERIYAELEGIASLDVFQSDTNFLIIRVPDAQKVFHALVSSGILVRNVSGYLLMENCLRFNIGLREENDQLLEKLKSL.

Lys218 is subject to N6-(pyridoxal phosphate)lysine.

The protein belongs to the class-II pyridoxal-phosphate-dependent aminotransferase family. Histidinol-phosphate aminotransferase subfamily. Homodimer. Pyridoxal 5'-phosphate is required as a cofactor.

The catalysed reaction is L-histidinol phosphate + 2-oxoglutarate = 3-(imidazol-4-yl)-2-oxopropyl phosphate + L-glutamate. The protein operates within amino-acid biosynthesis; L-histidine biosynthesis; L-histidine from 5-phospho-alpha-D-ribose 1-diphosphate: step 7/9. The sequence is that of Histidinol-phosphate aminotransferase from Chlorobium limicola (strain DSM 245 / NBRC 103803 / 6330).